A 151-amino-acid polypeptide reads, in one-letter code: MESPIRIETVDINTILKTLPHRYPFLLIDRVVNIRQDYSGIGIKNVSFNEPAFLGHFPERPVFPGVLMIEGMAQTAGVIGIMSVEGTEKPRAVYFLTIDKCKFRKPVLPGDTIEYHMKSIGRRKSMWWFHGDAKVNGVVVAEADVGAMLTD.

The active site involves His-56.

It belongs to the thioester dehydratase family. FabZ subfamily.

It localises to the cytoplasm. It carries out the reaction a (3R)-hydroxyacyl-[ACP] = a (2E)-enoyl-[ACP] + H2O. Its function is as follows. Involved in unsaturated fatty acids biosynthesis. Catalyzes the dehydration of short chain beta-hydroxyacyl-ACPs and long chain saturated and unsaturated beta-hydroxyacyl-ACPs. The chain is 3-hydroxyacyl-[acyl-carrier-protein] dehydratase FabZ from Rhodopseudomonas palustris (strain BisB18).